Consider the following 373-residue polypeptide: tRNA-specific 2-thiouridylase MnmA (373 aa).

Residues 7–14 (AMSGGVDS) and L33 each bind ATP. The active-site Nucleophile is the C101. An intrachain disulfide couples C101 to C215. G125 is an ATP binding site. The interaction with tRNA stretch occupies residues 165–167 (KDQ). C215 (cysteine persulfide intermediate) is an active-site residue.

Belongs to the MnmA/TRMU family.

It is found in the cytoplasm. The catalysed reaction is S-sulfanyl-L-cysteinyl-[protein] + uridine(34) in tRNA + AH2 + ATP = 2-thiouridine(34) in tRNA + L-cysteinyl-[protein] + A + AMP + diphosphate + H(+). In terms of biological role, catalyzes the 2-thiolation of uridine at the wobble position (U34) of tRNA, leading to the formation of s(2)U34. In Roseiflexus sp. (strain RS-1), this protein is tRNA-specific 2-thiouridylase MnmA.